The sequence spans 312 residues: Glycine--tRNA ligase alpha subunit (312 aa).

It belongs to the class-II aminoacyl-tRNA synthetase family. As to quaternary structure, tetramer of two alpha and two beta subunits.

The protein resides in the cytoplasm. The enzyme catalyses tRNA(Gly) + glycine + ATP = glycyl-tRNA(Gly) + AMP + diphosphate. In Delftia acidovorans (strain DSM 14801 / SPH-1), this protein is Glycine--tRNA ligase alpha subunit.